Consider the following 475-residue polypeptide: GTPase Der (475 aa).

2 consecutive EngA-type G domains span residues 2–166 (LRIA…NIPE) and 213–386 (LKIA…ETVS). GTP contacts are provided by residues 8–15 (GRPNVGKS), 55–59 (DTGGV), 118–121 (NKAD), 219–226 (GRPNVGKS), 266–270 (DTAGL), and 331–334 (NKWD). The 85-residue stretch at 387–471 (RKVPTPVVNK…PFDLEIKEKA (85 aa)) folds into the KH-like domain.

Belongs to the TRAFAC class TrmE-Era-EngA-EngB-Septin-like GTPase superfamily. EngA (Der) GTPase family. In terms of assembly, associates with the 50S ribosomal subunit.

Its function is as follows. GTPase that plays an essential role in the late steps of ribosome biogenesis. The protein is GTPase Der of Chlamydia felis (strain Fe/C-56) (Chlamydophila felis).